A 240-amino-acid polypeptide reads, in one-letter code: MRDMTPGPDLSGPQAADEFQSDPYAPEVGELPEQSAQDSEKVNKTGTTTIGISTSDGVVIATDMRASLGGRFVSNKNVQKVEEIHPTAALTLVGSVGGAQSFIRTLRAEVNLYEARRGEDISMKALSTLAGNFARGGPFFAINPILGGVDDDGHHVYSIDPAGGVMKDDYTVTGSGLTVAYGTLEDRYEEDMTNEEAKEVAAASIKAAAERDTGSGNGIYLADVTADGVDINGYDFDELL.

A propeptide spans Met1–Gly46 (removed in mature form; by autocatalysis). A disordered region spans residues Met1–Thr48. The Nucleophile role is filled by Thr47.

Belongs to the peptidase T1B family. As to quaternary structure, the 20S proteasome core is composed of 14 alpha and 14 beta subunits that assemble into four stacked heptameric rings, resulting in a barrel-shaped structure. The two inner rings, each composed of seven catalytic beta subunits, are sandwiched by two outer rings, each composed of seven alpha subunits. The catalytic chamber with the active sites is on the inside of the barrel. Has a gated structure, the ends of the cylinder being occluded by the N-termini of the alpha-subunits. Is capped at one or both ends by the proteasome regulatory ATPase, PAN.

It localises to the cytoplasm. It carries out the reaction Cleavage of peptide bonds with very broad specificity.. The formation of the proteasomal ATPase PAN-20S proteasome complex, via the docking of the C-termini of PAN into the intersubunit pockets in the alpha-rings, triggers opening of the gate for substrate entry. Interconversion between the open-gate and close-gate conformations leads to a dynamic regulation of the 20S proteasome proteolysis activity. In terms of biological role, component of the proteasome core, a large protease complex with broad specificity involved in protein degradation. This is Proteasome subunit beta 1 from Haloarcula marismortui (strain ATCC 43049 / DSM 3752 / JCM 8966 / VKM B-1809) (Halobacterium marismortui).